We begin with the raw amino-acid sequence, 422 residues long: UDP-N-acetylglucosamine 1-carboxyvinyltransferase (422 aa).

A phosphoenolpyruvate-binding site is contributed by 22–23 (KN). A UDP-N-acetyl-alpha-D-glucosamine-binding site is contributed by Arg-94. Catalysis depends on Cys-118, which acts as the Proton donor. 2-(S-cysteinyl)pyruvic acid O-phosphothioketal is present on Cys-118. Residues 123–127 (RPVDL), 163–166 (KVSV), Asp-308, and Ile-330 contribute to the UDP-N-acetyl-alpha-D-glucosamine site.

It belongs to the EPSP synthase family. MurA subfamily.

Its subcellular location is the cytoplasm. It carries out the reaction phosphoenolpyruvate + UDP-N-acetyl-alpha-D-glucosamine = UDP-N-acetyl-3-O-(1-carboxyvinyl)-alpha-D-glucosamine + phosphate. Its pathway is cell wall biogenesis; peptidoglycan biosynthesis. Functionally, cell wall formation. Adds enolpyruvyl to UDP-N-acetylglucosamine. The protein is UDP-N-acetylglucosamine 1-carboxyvinyltransferase of Yersinia enterocolitica serotype O:8 / biotype 1B (strain NCTC 13174 / 8081).